The chain runs to 334 residues: Formamidase (334 aa).

Residues 14–260 enclose the CN hydrolase domain; sequence MLMGLVQYPV…WEIVTAEVFP (247 aa). The Proton acceptor role is filled by Glu-60. Residue Lys-133 is the Proton donor of the active site. The active-site Nucleophile is Cys-166.

The protein belongs to the carbon-nitrogen hydrolase superfamily. Aliphatic amidase family.

It carries out the reaction formamide + H2O = formate + NH4(+). Is an aliphatic amidase with a restricted substrate specificity, as it only hydrolyzes formamide. The chain is Formamidase from Nitratidesulfovibrio vulgaris (strain DP4) (Desulfovibrio vulgaris).